The chain runs to 389 residues: Methane monooxygenase component A beta chain (389 aa).

M.capsulatus has two forms of methane monooxygenase, a soluble and a membrane-bound type. The soluble type consists of four components (A to D): protein A, comprising three chains, in an alpha-2, beta-2, gamma-2 configuration, is a nonheme iron protein containing an unusual mu-hydroxo bridge structure at its active site and interacts with both oxygen and methane.

The enzyme catalyses methane + NADH + O2 + H(+) = methanol + NAD(+) + H2O. It carries out the reaction methane + NADPH + O2 + H(+) = methanol + NADP(+) + H2O. Its function is as follows. Responsible for the initial oxygenation of methane to methanol in methanotrophs. It also catalyzes the monohydroxylation of a variety of unactivated alkenes, alicyclic, aromatic and heterocyclic compounds. In Methylococcus capsulatus (strain ATCC 33009 / NCIMB 11132 / Bath), this protein is Methane monooxygenase component A beta chain (mmoY).